The following is a 544-amino-acid chain: Chaperonin GroEL 2 (544 aa).

Residues 29-32, 86-90, Gly413, and Asp495 contribute to the ATP site; these read TLGP and DGTTT. Positions 525–544 are disordered; sequence PEPKSNKPAGGGGGVDDYDY. Residues 533–544 show a composition bias toward gly residues; that stretch reads AGGGGGVDDYDY.

Belongs to the chaperonin (HSP60) family. In terms of assembly, forms a cylinder of 14 subunits composed of two heptameric rings stacked back-to-back. Interacts with the co-chaperonin GroES.

The protein resides in the cytoplasm. It catalyses the reaction ATP + H2O + a folded polypeptide = ADP + phosphate + an unfolded polypeptide.. Its function is as follows. Together with its co-chaperonin GroES, plays an essential role in assisting protein folding. The GroEL-GroES system forms a nano-cage that allows encapsulation of the non-native substrate proteins and provides a physical environment optimized to promote and accelerate protein folding. The chain is Chaperonin GroEL 2 from Synechococcus sp. (strain JA-3-3Ab) (Cyanobacteria bacterium Yellowstone A-Prime).